Here is a 1522-residue protein sequence, read N- to C-terminus: DNA topoisomerase 2-binding protein 1 (1522 aa).

2 consecutive BRCT domains span residues 101 to 189 and 195 to 284; these read VYNM…RYTD and FKCP…IYKT. Threonine 298 bears the Phosphothreonine mark. A Phosphoserine modification is found at serine 301. 3 BRCT domains span residues 354 to 444, 548 to 633, and 641 to 738; these read APED…PYIH, TEEG…SNPL, and TGMT…HFLI. An interaction with CIP2A region spans residues 756–891; the sequence is INLNSDTAEH…AVALSASPQL (136 aa). Threonine 779 and threonine 848 each carry phosphothreonine. Positions 852–858 match the Nuclear localization signal motif; it reads PSQQKRK. Serine 860 bears the Phosphoserine mark. Threonine 861 is modified (phosphothreonine). A phosphoserine mark is found at serine 864, serine 886, and serine 888. The BRCT 6 domain occupies 900–991; the sequence is EAPKPLHKVV…KHLPESLYPH (92 aa). Serine 1002 bears the Phosphoserine mark. Residues 1018–1058 are disordered; sequence VSSTKDDEPDPLILEENDVDNMATNNKESAPSNGSGKNDSK. Residues 1024 to 1036 show a composition bias toward acidic residues; that stretch reads DEPDPLILEENDV. A compositionally biased stretch (polar residues) spans 1039–1058; sequence MATNNKESAPSNGSGKNDSK. Threonine 1062 and threonine 1064 each carry phosphothreonine. Positions 1083–1114 are enriched in polar residues; sequence SIVKPQGQRTSLSRSGCNSASSTPDSTRSARS. The tract at residues 1083-1118 is disordered; that stretch reads SIVKPQGQRTSLSRSGCNSASSTPDSTRSARSGRSR. BRCT domains lie at 1259-1351 and 1389-1486; these read ETHE…DYEW and IVEG…NYCL. The interval 1501 to 1522 is disordered; sequence TGLSQKRKAPTEKNKIKRPRVH. Residue serine 1504 is modified to Phosphoserine. The short motif at 1517–1520 is the Nuclear localization signal element; that stretch reads KRPR.

It belongs to the TOPBP1 family. In terms of assembly, interacts (via BRCT domains 1 and 2) with (phosphorylated) MDC1; promoting TOPBP1 recruitment to DNA damage sites during mitosis. Interacts (via BRCT domains 7 and 8) with (autophosphorylated) ATR; promoting activation of ATR. Interacts (via BRCT domains 7 and 8) with (phosphorylated) POLQ; specifically binds POLQ phosphorylated by PLK1, promoting POLQ recruitment to DNA damage sites. Interacts (via BRCT domains 1 and 2) with (phosphorylated) RAD9A. Interacts (via BRCT domain 2) with (phosphorylated) TP53BP1. Interacts (via BRCT domain 2) with (phosphorylated) HTATSF1. Interacts (via BRCT domains 7 and 8) with (phosphorylated) RAD51; promoting RAD51 recruitment to damaged chromatin. Interacts with CIP2A; forming the CIP2A-TOPBP1 complex. Interacts with POLE. Interacts with UBR5. Interacts with E2F1. Interacts with PML. Interacts with SMARCA2. Interacts with SMARCA4. Interacts with RHNO1. May interact with TOP2B. Interacts with TICRR. Interacts with HELB. Interacts (via residues 1233-1522) with RECQL4. Phosphorylated on serine and threonine residues in response to X-ray irradiation. Post-translationally, ubiquitinated and degraded by the proteasome. X-ray irradiation reduces ubiquitination. Deubiquitinated by USP13; leading to TOPBP1 stabilizion and activation of the ATR-TOPBP1 axis pathway. As to expression, highly expressed in heart, brain, placenta, lung and kidney.

The protein localises to the nucleus. Its subcellular location is the chromosome. It is found in the cytoplasm. The protein resides in the cytoskeleton. It localises to the microtubule organizing center. The protein localises to the centrosome. Its subcellular location is the spindle pole. Functionally, scaffold protein that acts as a key protein-protein adapter in DNA replication and DNA repair. Composed of multiple BRCT domains, which specifically recognize and bind phosphorylated proteins, bringing proteins together into functional combinations. Required for DNA replication initiation but not for the formation of pre-replicative complexes or the elongation stages. Necessary for the loading of replication factors onto chromatin, including GMNC, CDC45, DNA polymerases and components of the GINS complex. Plays a central role in DNA repair by bridging proteins and promoting recruitment of proteins to DNA damage sites. Involved in double-strand break (DSB) repair via homologous recombination in S-phase by promoting the exchange between the DNA replication factor A (RPA) complex and RAD51. Mechanistically, TOPBP1 is recruited to DNA damage sites in S-phase via interaction with phosphorylated HTATSF1, and promotes the loading of RAD51, thereby facilitating RAD51 nucleofilaments formation and RPA displacement, followed by homologous recombination. Involved in microhomology-mediated end-joining (MMEJ) DNA repair by promoting recruitment of polymerase theta (POLQ) to DNA damage sites during mitosis. MMEJ is an alternative non-homologous end-joining (NHEJ) machinery that takes place during mitosis to repair DSBs in DNA that originate in S-phase. Recognizes and binds POLQ phosphorylated by PLK1, enabling its recruitment to DSBs for subsequent repair. Involved in G1 DNA damage checkpoint by acting as a molecular adapter that couples TP53BP1 and the 9-1-1 complex. In response to DNA damage, triggers the recruitment of checkpoint signaling proteins on chromatin, which activate the CHEK1 signaling pathway and block S-phase progression. Acts as an activator of the kinase activity of ATR. Also required for chromosomal stability when DSBs occur during mitosis by forming filamentous assemblies that bridge MDC1 and tether broken chromosomes during mitosis. Together with CIP2A, plays an essential role in the response to genome instability generated by the presence of acentric chromosome fragments derived from shattered chromosomes within micronuclei. Micronuclei, which are frequently found in cancer cells, consist of chromatin surrounded by their own nuclear membrane: following breakdown of the micronuclear envelope, a process associated with chromothripsis, the CIP2A-TOPBP1 complex tethers chromosome fragments during mitosis to ensure clustered segregation of the fragments to a single daughter cell nucleus, facilitating re-ligation with limited chromosome scattering and loss. Recruits the SWI/SNF chromatin remodeling complex to E2F1-responsive promoters, thereby down-regulating E2F1 activity and inhibiting E2F1-dependent apoptosis during G1/S transition and after DNA damage. The polypeptide is DNA topoisomerase 2-binding protein 1 (Homo sapiens (Human)).